A 399-amino-acid chain; its full sequence is MAKVTFVRTKPHMNVGTIGQIDHGKTTLTAAITKYCSFFGWADYTPYEMIDKAPEERARGITINITHVEYQTEKRHYAHIDCPGHADYIKNMITGAAQMDGAILVLAATDGPMPQTREHVLLARQVNVPAMIVFINKVDMVDPELVDLVEMEVRDLLSKYEFPGDEVPVVRGSALKAIEAPNDPNDPAYKPIKELLDAMDTYFPDPVREVDKPFLMPIEDVFSITGRGTVVTGRIERGVIKPGVEAEIIGMSYEIKKTVITSVEMFRKELDEAIAGDNVGCLLRGSSKDEVERGQVLAKPGSITPLKKFKANIYVLKKEEGGRHTPFTKGYKPQFYIRTADVTGEIVDLPAGVEMVMPGDNVEMTIELIYPVAIEKGMRFAVREGGRTVGAGVVSEIIE.

Residues 10–207 (KPHMNVGTIG…AMDTYFPDPV (198 aa)) form the tr-type G domain. The tract at residues 19–26 (GQIDHGKT) is G1. Residue 19–26 (GQIDHGKT) coordinates GTP. Thr-26 is a binding site for Mg(2+). The tract at residues 60-64 (GITIN) is G2. Residues 81 to 84 (DCPG) are G3. GTP is bound by residues 81–85 (DCPGH) and 136–139 (NKVD). Positions 136–139 (NKVD) are G4. The segment at 173-175 (SAL) is G5.

The protein belongs to the TRAFAC class translation factor GTPase superfamily. Classic translation factor GTPase family. EF-Tu/EF-1A subfamily. As to quaternary structure, monomer.

It localises to the cytoplasm. The enzyme catalyses GTP + H2O = GDP + phosphate + H(+). Its function is as follows. GTP hydrolase that promotes the GTP-dependent binding of aminoacyl-tRNA to the A-site of ribosomes during protein biosynthesis. The protein is Elongation factor Tu of Fervidobacterium islandicum.